Consider the following 132-residue polypeptide: Small ribosomal subunit protein uS8 (132 aa).

It belongs to the universal ribosomal protein uS8 family. In terms of assembly, part of the 30S ribosomal subunit. Contacts proteins S5 and S12.

Its function is as follows. One of the primary rRNA binding proteins, it binds directly to 16S rRNA central domain where it helps coordinate assembly of the platform of the 30S subunit. The protein is Small ribosomal subunit protein uS8 of Treponema pallidum (strain Nichols).